The chain runs to 1205 residues: A disintegrin and metalloproteinase with thrombospondin motifs 3 (1205 aa).

An N-terminal signal peptide occupies residues 1-20 (MVLLSLWLIAAALVEVRTSA). Positions 21 to 249 (DGQAGNEEMV…QLNETMRRRR (229 aa)) are excised as a propeptide. Residues Asn-83, Asn-119, Asn-242, and Asn-345 are each glycosylated (N-linked (GlcNAc...) asparagine). The 205-residue stretch at 256–460 (YNIEVLLGVD…HSYDCLLDDP (205 aa)) folds into the Peptidase M12B domain. 3 disulfide bridges follow: Cys-333-Cys-382, Cys-376-Cys-455, and Cys-415-Cys-441. Position 398 (His-398) interacts with Zn(2+). The active site involves Glu-399. Residues His-402 and His-408 each coordinate Zn(2+). One can recognise a Disintegrin domain in the interval 470-550 (ELPGINYSMD…MWKNANQQKQ (81 aa)). The N-linked (GlcNAc...) asparagine glycan is linked to Asn-475. 7 cysteine pairs are disulfide-bonded: Cys-482–Cys-507, Cys-493–Cys-516, Cys-502–Cys-535, Cys-529–Cys-540, Cys-563–Cys-600, Cys-567–Cys-605, and Cys-578–Cys-590. One can recognise a TSP type-1 1 domain in the interval 551–606 (DGNWGSWTKFGSCSRTCGTGVRFRTRQCNNPMPINGGQDCPGVNFEYQLCNTEECQ). The spacer stretch occupies residues 713–844 (RTVKGTFTRT…NSNNVIQEEL (132 aa)). Asn-814 is a glycosylation site (N-linked (GlcNAc...) asparagine). TSP type-1 domains lie at 845–905 (DTFE…QECT), 906–965 (HPLW…NRVP), and 966–1014 (CPAQ…QLPP). An N-linked (GlcNAc...) asparagine glycan is attached at Asn-942. 3 cysteine pairs are disulfide-bonded: Cys-978–Cys-1010, Cys-982–Cys-1015, and Cys-993–Cys-999. The PLAC domain maps to 1015-1054 (CNDEPCLGDKSIFCQMEVLARYCSIPGYNKLCCESCSKRS). The tract at residues 1174 to 1205 (DSIGASSQARTSKKDGKIIDNRRPTRSSTLER) is disordered. Basic and acidic residues predominate over residues 1185-1205 (SKKDGKIIDNRRPTRSSTLER).

The cofactor is Zn(2+). The precursor is cleaved by a furin endopeptidase. Post-translationally, glycosylated. Can be O-fucosylated by POFUT2 on a serine or a threonine residue found within the consensus sequence C1-X(2)-(S/T)-C2-G of the TSP type-1 repeat domains where C1 and C2 are the first and second cysteine residue of the repeat, respectively. Fucosylated repeats can then be further glycosylated by the addition of a beta-1,3-glucose residue by the glucosyltransferase, B3GALTL. Fucosylation mediates the efficient secretion of ADAMTS family members. Can also be C-glycosylated with one or two mannose molecules on tryptophan residues within the consensus sequence W-X-X-W of the TPRs, and N-glycosylated. These other glycosylations can also facilitate secretion. Found in cartilage and skin.

It localises to the secreted. It is found in the extracellular space. The protein resides in the extracellular matrix. Its function is as follows. Cleaves the propeptides of type II collagen prior to fibril assembly. Does not act on types I and III collagens. The protein is A disintegrin and metalloproteinase with thrombospondin motifs 3 (ADAMTS3) of Homo sapiens (Human).